The sequence spans 227 residues: Enolase-phosphatase E1 (227 aa).

The protein belongs to the HAD-like hydrolase superfamily. MasA/MtnC family. Monomer. Mg(2+) is required as a cofactor.

It carries out the reaction 5-methylsulfanyl-2,3-dioxopentyl phosphate + H2O = 1,2-dihydroxy-5-(methylsulfanyl)pent-1-en-3-one + phosphate. It functions in the pathway amino-acid biosynthesis; L-methionine biosynthesis via salvage pathway; L-methionine from S-methyl-5-thio-alpha-D-ribose 1-phosphate: step 3/6. Its pathway is amino-acid biosynthesis; L-methionine biosynthesis via salvage pathway; L-methionine from S-methyl-5-thio-alpha-D-ribose 1-phosphate: step 4/6. Its function is as follows. Bifunctional enzyme that catalyzes the enolization of 2,3-diketo-5-methylthiopentyl-1-phosphate (DK-MTP-1-P) into the intermediate 2-hydroxy-3-keto-5-methylthiopentenyl-1-phosphate (HK-MTPenyl-1-P), which is then dephosphorylated to form the acireductone 1,2-dihydroxy-3-keto-5-methylthiopentene (DHK-MTPene). In Methylococcus capsulatus (strain ATCC 33009 / NCIMB 11132 / Bath), this protein is Enolase-phosphatase E1.